Consider the following 205-residue polypeptide: Holliday junction branch migration complex subunit RuvA (205 aa).

Positions 1-64 are domain I; it reads MIGRLRGTLA…EDAHLLYGFA (64 aa). Positions 65–143 are domain II; it reads EKRERELFRE…AWETSPAMFT (79 aa). The flexible linker stretch occupies residues 144–154; it reads LVSDGPLPVAS. The segment at 154–205 is domain III; it reads SESSAEADAVSALVSLGYKPQEASKAIAAIKDKAGLSSEELIRRSLKGMIAK.

Belongs to the RuvA family. As to quaternary structure, homotetramer. Forms an RuvA(8)-RuvB(12)-Holliday junction (HJ) complex. HJ DNA is sandwiched between 2 RuvA tetramers; dsDNA enters through RuvA and exits via RuvB. An RuvB hexamer assembles on each DNA strand where it exits the tetramer. Each RuvB hexamer is contacted by two RuvA subunits (via domain III) on 2 adjacent RuvB subunits; this complex drives branch migration. In the full resolvosome a probable DNA-RuvA(4)-RuvB(12)-RuvC(2) complex forms which resolves the HJ.

The protein localises to the cytoplasm. Its function is as follows. The RuvA-RuvB-RuvC complex processes Holliday junction (HJ) DNA during genetic recombination and DNA repair, while the RuvA-RuvB complex plays an important role in the rescue of blocked DNA replication forks via replication fork reversal (RFR). RuvA specifically binds to HJ cruciform DNA, conferring on it an open structure. The RuvB hexamer acts as an ATP-dependent pump, pulling dsDNA into and through the RuvAB complex. HJ branch migration allows RuvC to scan DNA until it finds its consensus sequence, where it cleaves and resolves the cruciform DNA. The sequence is that of Holliday junction branch migration complex subunit RuvA from Pseudomonas entomophila (strain L48).